The primary structure comprises 484 residues: Aspartyl/glutamyl-tRNA(Asn/Gln) amidotransferase subunit B (484 aa).

It belongs to the GatB/GatE family. GatB subfamily. As to quaternary structure, heterotrimer of A, B and C subunits.

It carries out the reaction L-glutamyl-tRNA(Gln) + L-glutamine + ATP + H2O = L-glutaminyl-tRNA(Gln) + L-glutamate + ADP + phosphate + H(+). It catalyses the reaction L-aspartyl-tRNA(Asn) + L-glutamine + ATP + H2O = L-asparaginyl-tRNA(Asn) + L-glutamate + ADP + phosphate + 2 H(+). Allows the formation of correctly charged Asn-tRNA(Asn) or Gln-tRNA(Gln) through the transamidation of misacylated Asp-tRNA(Asn) or Glu-tRNA(Gln) in organisms which lack either or both of asparaginyl-tRNA or glutaminyl-tRNA synthetases. The reaction takes place in the presence of glutamine and ATP through an activated phospho-Asp-tRNA(Asn) or phospho-Glu-tRNA(Gln). The chain is Aspartyl/glutamyl-tRNA(Asn/Gln) amidotransferase subunit B from Anaeromyxobacter dehalogenans (strain 2CP-C).